A 364-amino-acid polypeptide reads, in one-letter code: DNA polymerase IV (364 aa).

Positions 14–198 (IIHIDMDAFF…LPIEKFHGVG (185 aa)) constitute a UmuC domain. Residues D18 and D116 each coordinate Mg(2+). Residue E117 is part of the active site.

Belongs to the DNA polymerase type-Y family. Monomer. Mg(2+) is required as a cofactor.

It is found in the cytoplasm. The enzyme catalyses DNA(n) + a 2'-deoxyribonucleoside 5'-triphosphate = DNA(n+1) + diphosphate. Poorly processive, error-prone DNA polymerase involved in untargeted mutagenesis. Copies undamaged DNA at stalled replication forks, which arise in vivo from mismatched or misaligned primer ends. These misaligned primers can be extended by PolIV. Exhibits no 3'-5' exonuclease (proofreading) activity. May be involved in translesional synthesis, in conjunction with the beta clamp from PolIII. This Streptococcus pyogenes serotype M6 (strain ATCC BAA-946 / MGAS10394) protein is DNA polymerase IV.